We begin with the raw amino-acid sequence, 195 residues long: Small ribosomal subunit protein uS4c (195 aa).

The region spanning 82-143 (MRLDNILFRL…KQRSKALIQN (62 aa)) is the S4 RNA-binding domain.

Belongs to the universal ribosomal protein uS4 family. Part of the 30S ribosomal subunit. Contacts protein S5. The interaction surface between S4 and S5 is involved in control of translational fidelity.

Its subcellular location is the plastid. The protein localises to the chloroplast. Functionally, one of the primary rRNA binding proteins, it binds directly to 16S rRNA where it nucleates assembly of the body of the 30S subunit. Its function is as follows. With S5 and S12 plays an important role in translational accuracy. The polypeptide is Small ribosomal subunit protein uS4c (rps4) (Pillansia templemannii).